The following is a 735-amino-acid chain: Probable E3 ubiquitin-protein ligase MID2 (735 aa).

The RING-type zinc finger occupies 30-80; sequence CPICLELFEDPLLLPCAHSLCFSCAHRILVSSCSSGESIEPITAFQCPTCR. The B box-type 1; degenerate zinc finger occupies 137 to 184; that stretch reads IACQFCEQDPPRDAVKTCITCEVSYCDRCLRATHPNKKPFTSHRLVEP. A B box-type 2 zinc finger spans residues 190–232; the sequence is LRGITCLDHENEKVNMYCVSDDQLICALCKLVGRHRDHQVASL. Zn(2+) is bound by residues Cys-195, His-198, Cys-218, and His-224. A coiled-coil region spans residues 233–301; that stretch reads NDRFEKLKQT…IIQQRKQMIA (69 aa). In terms of domain architecture, COS spans 340 to 399; the sequence is LKENDQARFLQSAKNIAERVAMATASSQVLIPDINFNDAFENFALDFSREKKLLEGLDYL. Residues 398–531 enclose the Fibronectin type-III domain; sequence YLTAPNPPSI…RNSEPTRLKT (134 aa). A B30.2/SPRY domain is found at 516 to 709; that stretch reads INQAGSRNSE…ILSGLPAPDF (194 aa).

It belongs to the TRIM/RBCC family. As to quaternary structure, homodimer or heterodimer with MID1. Interacts with IGBP1. Post-translationally, phosphorylated on serine and threonine residues. Low level in fetal kidney and lung, and in adult prostate, ovary and small intestine.

The protein resides in the cytoplasm. It localises to the cytoskeleton. The enzyme catalyses S-ubiquitinyl-[E2 ubiquitin-conjugating enzyme]-L-cysteine + [acceptor protein]-L-lysine = [E2 ubiquitin-conjugating enzyme]-L-cysteine + N(6)-ubiquitinyl-[acceptor protein]-L-lysine.. It participates in protein modification; protein ubiquitination. E3 ubiquitin ligase that plays a role in microtubule stabilization. Mediates the 'Lys-48'-linked polyubiquitination of LRRK2 to drive its localization to microtubules and its proteasomal degradation in neurons. This ubiquitination inhibits LRRK2 kinase activation by RAB29. The sequence is that of Probable E3 ubiquitin-protein ligase MID2 (MID2) from Homo sapiens (Human).